Here is a 133-residue protein sequence, read N- to C-terminus: Large ribosomal subunit protein bL17 (133 aa).

Belongs to the bacterial ribosomal protein bL17 family. Part of the 50S ribosomal subunit. Contacts protein L32.

In Nitratidesulfovibrio vulgaris (strain ATCC 29579 / DSM 644 / CCUG 34227 / NCIMB 8303 / VKM B-1760 / Hildenborough) (Desulfovibrio vulgaris), this protein is Large ribosomal subunit protein bL17.